A 503-amino-acid polypeptide reads, in one-letter code: Arabinose import ATP-binding protein AraG 1 (503 aa).

2 consecutive ABC transporter domains span residues 5–240 (LRFD…MVGR) and 251–497 (RTLG…LPQT). Residue 37–44 (GENGAGKS) coordinates ATP.

It belongs to the ABC transporter superfamily. Arabinose importer (TC 3.A.1.2.2) family. The complex is composed of two ATP-binding proteins (AraG), two transmembrane proteins (AraH) and a solute-binding protein (AraF).

The protein localises to the cell inner membrane. It carries out the reaction L-arabinose(out) + ATP + H2O = L-arabinose(in) + ADP + phosphate + H(+). Part of the ABC transporter complex AraFGH involved in arabinose import. Responsible for energy coupling to the transport system. The chain is Arabinose import ATP-binding protein AraG 1 from Burkholderia cenocepacia (strain HI2424).